The following is a 193-amino-acid chain: Xanthine phosphoribosyltransferase (193 aa).

Xanthine contacts are provided by leucine 20 and threonine 27. 128-132 provides a ligand contact to 5-phospho-alpha-D-ribose 1-diphosphate; it reads ANGQA. Lysine 156 serves as a coordination point for xanthine.

Belongs to the purine/pyrimidine phosphoribosyltransferase family. Xpt subfamily. Homodimer.

Its subcellular location is the cytoplasm. It catalyses the reaction XMP + diphosphate = xanthine + 5-phospho-alpha-D-ribose 1-diphosphate. It functions in the pathway purine metabolism; XMP biosynthesis via salvage pathway; XMP from xanthine: step 1/1. In terms of biological role, converts the preformed base xanthine, a product of nucleic acid breakdown, to xanthosine 5'-monophosphate (XMP), so it can be reused for RNA or DNA synthesis. This chain is Xanthine phosphoribosyltransferase, found in Streptococcus pneumoniae serotype 4 (strain ATCC BAA-334 / TIGR4).